The sequence spans 243 residues: tRNA (guanine-N(1)-)-methyltransferase (243 aa).

Residues G108 and 127 to 132 (LGDFVL) each bind S-adenosyl-L-methionine.

It belongs to the RNA methyltransferase TrmD family. Homodimer.

Its subcellular location is the cytoplasm. The catalysed reaction is guanosine(37) in tRNA + S-adenosyl-L-methionine = N(1)-methylguanosine(37) in tRNA + S-adenosyl-L-homocysteine + H(+). Functionally, specifically methylates guanosine-37 in various tRNAs. The chain is tRNA (guanine-N(1)-)-methyltransferase from Streptococcus pyogenes serotype M2 (strain MGAS10270).